The following is a 230-amino-acid chain: MSRLPSLSRLCLAIACSALLGGCVAAGDVRPFAELAPIVPVVAPVAQPTAGAIYAAGPSLNLYGDRRARDVGDLLTVNLVESTTASSTANTSISKKDATTMGAPTLLGAPLTVGGLNVLENSTSGDRSFAGKGNTAQSNRMQGSVTVTVMQRLPNGNLVIQGQKNLRLTQGDELVQVQGIVRAADIAPDNTVPSSKVADARIAYGGRGAIAQSNAMGWLSRFFNSRLSPY.

The first 15 residues, 1–15 (MSRLPSLSRLCLAIA), serve as a signal peptide directing secretion. Residue C16 is the site of N-palmitoyl cysteine attachment. C16 is lipidated: S-diacylglycerol cysteine.

It belongs to the FlgH family. In terms of assembly, the basal body constitutes a major portion of the flagellar organelle and consists of four rings (L,P,S, and M) mounted on a central rod.

Its subcellular location is the cell outer membrane. The protein resides in the bacterial flagellum basal body. Its function is as follows. Assembles around the rod to form the L-ring and probably protects the motor/basal body from shearing forces during rotation. In Xanthomonas euvesicatoria pv. vesicatoria (strain 85-10) (Xanthomonas campestris pv. vesicatoria), this protein is Flagellar L-ring protein.